Consider the following 88-residue polypeptide: Small ribosomal subunit protein uS15 (88 aa).

The protein belongs to the universal ribosomal protein uS15 family. Part of the 30S ribosomal subunit. Forms a bridge to the 50S subunit in the 70S ribosome, contacting the 23S rRNA.

One of the primary rRNA binding proteins, it binds directly to 16S rRNA where it helps nucleate assembly of the platform of the 30S subunit by binding and bridging several RNA helices of the 16S rRNA. Functionally, forms an intersubunit bridge (bridge B4) with the 23S rRNA of the 50S subunit in the ribosome. This is Small ribosomal subunit protein uS15 from Mycoplasma capricolum subsp. capricolum (strain California kid / ATCC 27343 / NCTC 10154).